The chain runs to 906 residues: Alanine--tRNA ligase, chloroplastic/mitochondrial (906 aa).

Residues 1–10 (MSAATERERL) are compositionally biased toward basic and acidic residues. The tract at residues 1-22 (MSAATERERLTNANPNARGKDN) is disordered. Residues histidine 589, histidine 593, cysteine 691, and histidine 695 each contribute to the Zn(2+) site.

This sequence belongs to the class-II aminoacyl-tRNA synthetase family. Monomer. It depends on Zn(2+) as a cofactor.

Its subcellular location is the plastid. The protein localises to the chloroplast. It is found in the mitochondrion. The catalysed reaction is tRNA(Ala) + L-alanine + ATP = L-alanyl-tRNA(Ala) + AMP + diphosphate. Its function is as follows. Catalyzes the attachment of alanine to tRNA(Ala) in a two-step reaction: alanine is first activated by ATP to form Ala-AMP and then transferred to the acceptor end of tRNA(Ala). Also edits incorrectly charged tRNA(Ala) via its editing domain. The chain is Alanine--tRNA ligase, chloroplastic/mitochondrial from Ostreococcus lucimarinus (strain CCE9901).